Consider the following 136-residue polypeptide: MPSVYRPLVNFVAKAMQAVLNLALLCLGIILVVFLGKETLHLAHVLFTPEPVSKYKLVEGLVVYFLYFEFIALIVKYFESGFHFPLRYFVYIGITAIVRLIIVDHESPLAVLIYSAAILILVITLWLCNSNRLKRE.

4 helical membrane-spanning segments follow: residues 15–35 (AMQAVLNLALLCLGIILVVFL), 58–78 (VEGLVVYFLYFEFIALIVKYF), 82–102 (FHFPLRYFVYIGITAIVRLII), and 108–128 (PLAVLIYSAAILILVITLWLC).

This sequence belongs to the PsiE family.

The protein resides in the cell inner membrane. This is Protein PsiE homolog from Klebsiella pneumoniae subsp. pneumoniae (strain ATCC 700721 / MGH 78578).